Consider the following 88-residue polypeptide: Putative membrane protein insertion efficiency factor (88 aa).

Residues 68–88 (VPPPNSDTRARGEADARSHRL) are disordered. The segment covering 75–88 (TRARGEADARSHRL) has biased composition (basic and acidic residues).

The protein belongs to the UPF0161 family.

Its subcellular location is the cell inner membrane. In terms of biological role, could be involved in insertion of integral membrane proteins into the membrane. The polypeptide is Putative membrane protein insertion efficiency factor (Burkholderia orbicola (strain MC0-3)).